The sequence spans 356 residues: Iron-regulated protein A (356 aa).

An N-terminal signal peptide occupies residues 1–44 (MIVTGSQVRQGLNTWFVLPLRRTAIGLGCAGVATLFSACGQTQA). Hydrophilic stretches follow at residues 75–145 (QALQ…EQRE) and 240–310 (GGPL…ATAR).

As to quaternary structure, the iron-regulated protein A is one unit of the protein complex CPVI-4, which is synthesized under iron deficient conditions.

It localises to the cell inner membrane. IrpA occurs under iron-deficient growth conditions in cyanobacterium Synechococcus and disappears in cells recovering from iron starvation. It seems to be involved in iron acquisition, uptake or storage. In Synechococcus elongatus (strain ATCC 33912 / PCC 7942 / FACHB-805) (Anacystis nidulans R2), this protein is Iron-regulated protein A (irpA).